The sequence spans 298 residues: Probable endonuclease 4 (298 aa).

9 residues coordinate Zn(2+): His-69, His-111, Glu-146, Asp-180, His-183, His-215, Asp-228, His-230, and Glu-260.

It belongs to the AP endonuclease 2 family. Zn(2+) serves as cofactor.

It catalyses the reaction Endonucleolytic cleavage to 5'-phosphooligonucleotide end-products.. In terms of biological role, endonuclease IV plays a role in DNA repair. It cleaves phosphodiester bonds at apurinic or apyrimidinic (AP) sites, generating a 3'-hydroxyl group and a 5'-terminal sugar phosphate. The protein is Probable endonuclease 4 of Bacillus cereus (strain 03BB102).